The chain runs to 512 residues: DNA-binding protein (512 aa).

The tract at residues methionine 1–glutamate 105 is disordered. A compositionally biased stretch (basic and acidic residues) spans leucine 9 to arginine 21. The span at glutamine 69 to proline 78 shows a compositional bias: pro residues. Residues proline 79–histidine 88 show a composition bias toward basic residues. The span at glutamine 96–glutamate 105 shows a compositional bias: acidic residues. Phosphotyrosine; by host is present on tyrosine 174. Cysteine 263 and histidine 265 together coordinate Zn(2+). The tract at residues isoleucine 276–leucine 310 is flexible loop. Positions 318, 334, 376, 378, 430, and 447 each coordinate Zn(2+). The segment at valine 495–phenylalanine 512 is C-terminal arm, DBP binding.

It belongs to the adenoviridae E2A DNA-binding protein family. Homomultimerizes on viral ssDNA bound to pTP. Forms a initiation complex with viral polymerase, pTP and hosts NFIA and POU2F1/OCT1. Interacts with host SRCAP.

It localises to the host nucleus. Its function is as follows. Plays a role in the elongation phase of viral strand displacement replication by unwinding the template in an ATP-independent fashion, employing its capacity to form multimers. Also enhances the rate of initiation. Released from template upon second strand synthesis. Assembles in complex with viral pTP, viral pol, host NFIA and host POU2F1/OCT1 on viral origin of replication. Covers the whole ssDNA genome during synthesis. The complementary strand synthesis induces its relese from DNA template. May inhibit cellular transcription mediated by the interaction between host SRCAP and CBP. The chain is DNA-binding protein from Homo sapiens (Human).